A 136-amino-acid chain; its full sequence is ATP synthase F(0) complex subunit C1, mitochondrial (136 aa).

The transit peptide at 1 to 61 (MQTAGALFIS…REFQTSVVSR (61 aa)) directs the protein to the mitochondrion. Residues 77–97 (VGVAGSGAGIGTVFGSLIIGY) traverse the membrane as a helical segment. Residue lysine 104 is modified to N6,N6,N6-trimethyllysine. The chain crosses the membrane as a helical span at residues 112-132 (ILGFALSEAMGLFCLMVAFLI).

Belongs to the ATPase C chain family. In terms of assembly, homooctamer; the c-ring consists of eight c subunits forming a circle, and each subunit adopts a hairpin shape. Component of the ATP synthase complex composed at least of ATP5F1A/subunit alpha, ATP5F1B/subunit beta, ATP5MC1/subunit c (homooctomer), MT-ATP6/subunit a, MT-ATP8/subunit 8, ATP5ME/subunit e, ATP5MF/subunit f, ATP5MG/subunit g, ATP5MK/subunit k, ATP5MJ/subunit j, ATP5F1C/subunit gamma, ATP5F1D/subunit delta, ATP5F1E/subunit epsilon, ATP5PF/subunit F6, ATP5PB/subunit b, ATP5PD/subunit d, ATP5PO/subunit OSCP. ATP synthase complex consists of a soluble F(1) head domain (subunits alpha(3) and beta(3)) - the catalytic core - and a membrane F(0) domain - the membrane proton channel (subunits c, a, 8, e, f, g, k and j). These two domains are linked by a central stalk (subunits gamma, delta, and epsilon) rotating inside the F1 region and a stationary peripheral stalk (subunits F6, b, d, and OSCP). Interacts with TMEM70 (homooligomer form); this interaction facilitates the oligomer formation of subunit c/ATP5MC1 (c-ring) and the c-ring membrane insertion and also protects ATP5MC1 against intramitochondrial proteolysis. Trimethylated by ATPSCKMT at Lys-104. Methylation is required for proper incorporation of the C subunit into the ATP synthase complex and mitochondrial respiration.

Its subcellular location is the mitochondrion membrane. The enzyme catalyses H(+)(in) = H(+)(out). Functionally, subunit c, of the mitochondrial membrane ATP synthase complex (F(1)F(0) ATP synthase or Complex V) that produces ATP from ADP in the presence of a proton gradient across the membrane which is generated by electron transport complexes of the respiratory chain. ATP synthase complex consist of a soluble F(1) head domain - the catalytic core - and a membrane F(1) domain - the membrane proton channel. These two domains are linked by a central stalk rotating inside the F(1) region and a stationary peripheral stalk. During catalysis, ATP synthesis in the catalytic domain of F(1) is coupled via a rotary mechanism of the central stalk subunits to proton translocation. With the subunit a (MT-ATP6), forms the proton-conducting channel in the F(0) domain, that contains two crucial half-channels (inlet and outlet) that facilitate proton movement from the mitochondrial intermembrane space (IMS) into the matrix. Protons are taken up via the inlet half-channel and released through the outlet half-channel, following a Grotthuss mechanism. In Homo sapiens (Human), this protein is ATP synthase F(0) complex subunit C1, mitochondrial.